A 96-amino-acid chain; its full sequence is Citrate lyase acyl carrier protein (96 aa).

At S14 the chain carries O-(phosphoribosyl dephospho-coenzyme A)serine.

Belongs to the CitD family. As to quaternary structure, oligomer with a subunit composition of (alpha,beta,gamma)6.

It localises to the cytoplasm. Its function is as follows. Covalent carrier of the coenzyme of citrate lyase. The sequence is that of Citrate lyase acyl carrier protein from Pectobacterium carotovorum subsp. carotovorum (strain PC1).